Here is a 460-residue protein sequence, read N- to C-terminus: Nuclear distribution protein PAC1 (460 aa).

One can recognise a LisH domain in the interval glutamine 9–glutamate 41. The stretch at threonine 61 to threonine 88 forms a coiled coil. Residues threonine 82 to asparagine 92 show a composition bias toward polar residues. A disordered region spans residues threonine 82 to proline 105. 7 WD repeats span residues serine 112–lysine 153, histidine 155–arginine 195, glycine 199–threonine 246, glycine 249–lysine 288, glycine 293–isoleucine 354, glycine 355–lysine 394, and serine 399–arginine 456. Residues isoleucine 414 to alanine 433 are disordered.

It belongs to the WD repeat LIS1/nudF family. Self-associates. Interacts with NDL1 and dynein.

Its subcellular location is the cytoplasm. The protein resides in the cytoskeleton. It localises to the spindle pole. Functionally, positively regulates the activity of the minus-end directed microtubule motor protein dynein. May enhance dynein-mediated microtubule sliding by targeting dynein to the microtubule plus end. Required for nuclear migration during vegetative growth as well as development. Required for retrograde early endosome (EE) transport from the hyphal tip. Required for localization of dynein to the mitotic spindle poles. Recruits additional proteins to the dynein complex at SPBs. This Gibberella zeae (strain ATCC MYA-4620 / CBS 123657 / FGSC 9075 / NRRL 31084 / PH-1) (Wheat head blight fungus) protein is Nuclear distribution protein PAC1.